We begin with the raw amino-acid sequence, 161 residues long: Allophycocyanin alpha chain (161 aa).

At Asn71 the chain carries N4-methylasparagine. Residue Cys81 participates in (2R,3E)-phycocyanobilin binding.

Belongs to the phycobiliprotein family. Heterodimer of an alpha and a beta chain. In terms of processing, contains one covalently linked phycocyanobilin chromophore.

Its subcellular location is the cellular thylakoid membrane. In terms of biological role, light-harvesting photosynthetic bile pigment-protein from the phycobiliprotein complex. Allophycocyanin has a maximum absorption at approximately 650 nanometers. The sequence is that of Allophycocyanin alpha chain (apcA) from Thermosynechococcus vestitus (strain NIES-2133 / IAM M-273 / BP-1).